The following is a 906-amino-acid chain: Protein translocase subunit SecA (906 aa).

ATP-binding positions include glutamine 87, 105–109 (GEGKT), and aspartate 507. Positions 890, 892, 901, and 902 each coordinate Zn(2+).

This sequence belongs to the SecA family. In terms of assembly, monomer and homodimer. Part of the essential Sec protein translocation apparatus which comprises SecA, SecYEG and auxiliary proteins SecDF-YajC and YidC. Zn(2+) serves as cofactor.

Its subcellular location is the cell inner membrane. It localises to the cytoplasm. It carries out the reaction ATP + H2O + cellular proteinSide 1 = ADP + phosphate + cellular proteinSide 2.. Functionally, part of the Sec protein translocase complex. Interacts with the SecYEG preprotein conducting channel. Has a central role in coupling the hydrolysis of ATP to the transfer of proteins into and across the cell membrane, serving both as a receptor for the preprotein-SecB complex and as an ATP-driven molecular motor driving the stepwise translocation of polypeptide chains across the membrane. The polypeptide is Protein translocase subunit SecA (Thiobacillus denitrificans (strain ATCC 25259 / T1)).